Consider the following 265-residue polypeptide: Acetylglutamate kinase (265 aa).

Residues 41–42 (GG), R63, and N156 contribute to the substrate site.

This sequence belongs to the acetylglutamate kinase family. ArgB subfamily.

It localises to the cytoplasm. It catalyses the reaction N-acetyl-L-glutamate + ATP = N-acetyl-L-glutamyl 5-phosphate + ADP. Its pathway is amino-acid biosynthesis; L-arginine biosynthesis; N(2)-acetyl-L-ornithine from L-glutamate: step 2/4. Catalyzes the ATP-dependent phosphorylation of N-acetyl-L-glutamate. The polypeptide is Acetylglutamate kinase (Oceanobacillus iheyensis (strain DSM 14371 / CIP 107618 / JCM 11309 / KCTC 3954 / HTE831)).